The sequence spans 214 residues: Adenylate kinase (214 aa).

Residue 12-17 (GVGKGT) participates in ATP binding. The interval 32-61 (STGNIFRSQIASNSELGIKLKEIVESGGYV) is NMP. AMP is bound by residues Thr-33, Arg-38, 59–61 (GYV), 88–91 (GYPR), and Gln-95. The interval 126-163 (GRRICPSCNAQYHIYFKKSKLDTKCEIDQSELIQRKDD) is LID. Arg-127 provides a ligand contact to ATP. 4 residues coordinate Zn(2+): Cys-130, Cys-133, Cys-150, and Asp-153. AMP contacts are provided by Arg-160 and Arg-171. Lys-199 contributes to the ATP binding site.

The protein belongs to the adenylate kinase family. Monomer.

It localises to the cytoplasm. The enzyme catalyses AMP + ATP = 2 ADP. The protein operates within purine metabolism; AMP biosynthesis via salvage pathway; AMP from ADP: step 1/1. Its function is as follows. Catalyzes the reversible transfer of the terminal phosphate group between ATP and AMP. Plays an important role in cellular energy homeostasis and in adenine nucleotide metabolism. This is Adenylate kinase from Mycoplasmopsis pulmonis (strain UAB CTIP) (Mycoplasma pulmonis).